A 316-amino-acid polypeptide reads, in one-letter code: Porphobilinogen deaminase (316 aa).

An S-(dipyrrolylmethanemethyl)cysteine modification is found at Cys-242.

This sequence belongs to the HMBS family. Monomer. Dipyrromethane serves as cofactor.

It carries out the reaction 4 porphobilinogen + H2O = hydroxymethylbilane + 4 NH4(+). It participates in porphyrin-containing compound metabolism; protoporphyrin-IX biosynthesis; coproporphyrinogen-III from 5-aminolevulinate: step 2/4. Its function is as follows. Tetrapolymerization of the monopyrrole PBG into the hydroxymethylbilane pre-uroporphyrinogen in several discrete steps. The polypeptide is Porphobilinogen deaminase (Thioalkalivibrio sulfidiphilus (strain HL-EbGR7)).